Consider the following 130-residue polypeptide: Small ribosomal subunit protein uS11 (130 aa).

The protein belongs to the universal ribosomal protein uS11 family. Part of the 30S ribosomal subunit. Interacts with proteins S7 and S18. Binds to IF-3.

Its function is as follows. Located on the platform of the 30S subunit, it bridges several disparate RNA helices of the 16S rRNA. Forms part of the Shine-Dalgarno cleft in the 70S ribosome. In Dehalococcoides mccartyi (strain ATCC BAA-2266 / KCTC 15142 / 195) (Dehalococcoides ethenogenes (strain 195)), this protein is Small ribosomal subunit protein uS11.